The following is a 283-amino-acid chain: 4-hydroxybenzoate octaprenyltransferase (283 aa).

9 helical membrane passes run 16–36 (PIGT…AGAG), 40–60 (LRIV…GCVI), 85–105 (ISAT…FGLV), 108–128 (LNTE…LYPF), 135–155 (LPQI…FTAL), 160–180 (WFIA…YDTE), 204–224 (FDRL…GWIL), 226–246 (LITV…LFAY), and 263–283 (FLHN…HYWF).

The protein belongs to the UbiA prenyltransferase family. Mg(2+) serves as cofactor.

It localises to the cell inner membrane. The enzyme catalyses all-trans-octaprenyl diphosphate + 4-hydroxybenzoate = 4-hydroxy-3-(all-trans-octaprenyl)benzoate + diphosphate. It participates in cofactor biosynthesis; ubiquinone biosynthesis. Its function is as follows. Catalyzes the prenylation of para-hydroxybenzoate (PHB) with an all-trans polyprenyl group. Mediates the second step in the final reaction sequence of ubiquinone-8 (UQ-8) biosynthesis, which is the condensation of the polyisoprenoid side chain with PHB, generating the first membrane-bound Q intermediate 3-octaprenyl-4-hydroxybenzoate. The sequence is that of 4-hydroxybenzoate octaprenyltransferase from Idiomarina loihiensis (strain ATCC BAA-735 / DSM 15497 / L2-TR).